Consider the following 609-residue polypeptide: Laccase-1 (609 aa).

A signal peptide spans 1–20; sequence MYLSTVLFPLLALNLGLSHA. The region spanning 45 to 141 is the Plastocyanin-like 1 domain; the sequence is VFTNGEYPGP…DGQVGAMYIR (97 aa). N-linked (GlcNAc...) asparagine glycosylation occurs at Asn75. Residues His79, His81, His123, and His125 each coordinate Cu cation. An N-linked (GlcNAc...) asparagine glycan is attached at Asn257. In terms of domain architecture, Plastocyanin-like 2 spans 270 to 372; that stretch reads TPSSVEPPVI…MSVYAILSYV (103 aa). Residues Asn403, Asn443, and Asn486 are each glycosylated (N-linked (GlcNAc...) asparagine). One can recognise a Plastocyanin-like 3 domain in the interval 463 to 602; that stretch reads STPLLFEPDP…MGGMALALLD (140 aa). The Cu cation site is built by His508, His511, and His513. Asn531 and Asn546 each carry an N-linked (GlcNAc...) asparagine glycan. His585, Cys586, His587, and His591 together coordinate Cu cation.

The protein belongs to the multicopper oxidase family. Cu cation is required as a cofactor.

It is found in the secreted. It carries out the reaction 4 hydroquinone + O2 = 4 benzosemiquinone + 2 H2O. Required for the conversion of the yellow polyketide pigment synthesized by wA to the conidial green pigment. This is Laccase-1 (yA) from Emericella nidulans (strain FGSC A4 / ATCC 38163 / CBS 112.46 / NRRL 194 / M139) (Aspergillus nidulans).